Reading from the N-terminus, the 309-residue chain is Ankyrin repeat and SOCS box protein 12 (309 aa).

ANK repeat units lie at residues 63–92, 96–125, 129–158, 171–200, and 213–243; these read VPGT…DVDS, KAQT…SPGG, NNCS…EANV, SCSG…DPDY, and RPRT…NIYL. The 41-residue stretch at 268–308 folds into the SOCS box domain; the sequence is PRSLLSQVRLVVRRALCQAGQPQAINQLDIPPMLISYLKHQ.

Belongs to the ankyrin SOCS box (ASB) family. Interacts with CUL5 and RNF7.

The protein operates within protein modification; protein ubiquitination. Functionally, probable substrate-recognition component of a SCF-like ECS (Elongin-Cullin-SOCS-box protein) E3 ubiquitin-protein ligase complex which mediates the ubiquitination and subsequent proteasomal degradation of target proteins. The protein is Ankyrin repeat and SOCS box protein 12 (ASB12) of Homo sapiens (Human).